The following is a 277-amino-acid chain: Bifunctional protein FolD (277 aa).

Residues 164 to 166 (GRS), Ser189, and Thr230 each bind NADP(+).

This sequence belongs to the tetrahydrofolate dehydrogenase/cyclohydrolase family. Homodimer.

The enzyme catalyses (6R)-5,10-methylene-5,6,7,8-tetrahydrofolate + NADP(+) = (6R)-5,10-methenyltetrahydrofolate + NADPH. It carries out the reaction (6R)-5,10-methenyltetrahydrofolate + H2O = (6R)-10-formyltetrahydrofolate + H(+). It functions in the pathway one-carbon metabolism; tetrahydrofolate interconversion. Functionally, catalyzes the oxidation of 5,10-methylenetetrahydrofolate to 5,10-methenyltetrahydrofolate and then the hydrolysis of 5,10-methenyltetrahydrofolate to 10-formyltetrahydrofolate. This chain is Bifunctional protein FolD, found in Clostridium perfringens (strain 13 / Type A).